Consider the following 203-residue polypeptide: Ribosome hibernation promotion factor (203 aa).

The protein belongs to the HPF/YfiA ribosome-associated protein family. Long HPF subfamily. Interacts with 100S ribosomes.

Its subcellular location is the cytoplasm. Required for dimerization of active 70S ribosomes into 100S ribosomes in stationary phase; 100S ribosomes are translationally inactive and sometimes present during exponential growth. This chain is Ribosome hibernation promotion factor, found in Bradyrhizobium diazoefficiens (strain JCM 10833 / BCRC 13528 / IAM 13628 / NBRC 14792 / USDA 110).